We begin with the raw amino-acid sequence, 248 residues long: tRNA (guanine-N(7)-)-methyltransferase (248 aa).

S-adenosyl-L-methionine-binding positions include glycine 70, 93–94 (EI), 129–130 (NA), and leucine 149. The active site involves aspartate 152. 227 to 229 (SEE) provides a ligand contact to S-adenosyl-L-methionine.

It belongs to the class I-like SAM-binding methyltransferase superfamily. TrmB family.

The protein resides in the nucleus. The enzyme catalyses guanosine(46) in tRNA + S-adenosyl-L-methionine = N(7)-methylguanosine(46) in tRNA + S-adenosyl-L-homocysteine. The protein operates within tRNA modification; N(7)-methylguanine-tRNA biosynthesis. In terms of biological role, catalyzes the formation of N(7)-methylguanine at position 46 (m7G46) in tRNA. The protein is tRNA (guanine-N(7)-)-methyltransferase of Drosophila mojavensis (Fruit fly).